The primary structure comprises 156 residues: Large ribosomal subunit protein uL15 (156 aa).

The interval 1 to 44 (MKLNELRDNPGASPKRTRVGRGPGSGKGKMGGRGIKGQKSRSGV) is disordered. Residues 21–35 (RGPGSGKGKMGGRGI) show a composition bias toward gly residues.

It belongs to the universal ribosomal protein uL15 family. In terms of assembly, part of the 50S ribosomal subunit.

Binds to the 23S rRNA. The protein is Large ribosomal subunit protein uL15 of Ruegeria sp. (strain TM1040) (Silicibacter sp.).